The sequence spans 505 residues: Probable cytochrome P450 28c1 (505 aa).

Cys444 contacts heme.

This sequence belongs to the cytochrome P450 family. Requires heme as cofactor.

It localises to the endoplasmic reticulum membrane. Its subcellular location is the microsome membrane. Its function is as follows. May be involved in the metabolism of insect hormones and in the breakdown of synthetic insecticides. This Drosophila melanogaster (Fruit fly) protein is Probable cytochrome P450 28c1 (Cyp28c1).